The following is an 862-amino-acid chain: Interleukin-12 receptor subunit beta-2 (862 aa).

The first 23 residues, 1 to 23 (MAHTFRGCSLAFMFIITWLLIKA), serve as a signal peptide directing secretion. Residues 24 to 622 (KIDACKRGDV…REFCLQGKAN (599 aa)) lie on the Extracellular side of the membrane. N-linked (GlcNAc...) asparagine glycosylation is found at Asn48, Asn129, Asn166, Asn195, and Asn271. Fibronectin type-III domains follow at residues 126–221 (QPQN…FLDI), 226–319 (PPWD…TPEE), 320–419 (EPTG…LCEA), 423–520 (APRQ…KHKA), and 521–620 (PLSG…LQGK). The WSXWS motif motif lies at 305-309 (WSDWS). Asn347, Asn376, and Asn480 each carry an N-linked (GlcNAc...) asparagine glycan. The helical transmembrane segment at 623-643 (WMAFVAPSICIAIIMVGIFST) threads the bilayer. The Cytoplasmic segment spans residues 644 to 862 (HYFQQKVFVL…LKMRCDSLML (219 aa)). Positions 662–670 (CSREIPDPA) match the Box 1 motif motif. The disordered stretch occupies residues 725 to 755 (NWPQREKGIQGHQASEKDMMHSASSPPPPRA). Over residues 728-744 (QREKGIQGHQASEKDMM) the composition is skewed to basic and acidic residues. Residues 796–801 (THDGYL) form a required for STAT4 binding region. Residue Tyr800 is modified to Phosphotyrosine.

The protein belongs to the type I cytokine receptor family. Type 2 subfamily. In terms of assembly, heterodimer/heterooligomer; disulfide-linked. The functional high affinity IL12 receptor is composed of I12RB1 and IL12RB2. Il12RB2 binds JAK2 (via its N-terminal) through a membrane-proximal region of the cytoplasmic domain. Interaction, in vitro and in vivo, with SOCS3 (via its SH2 domain) inhibits the STAT4-mediated activation. Binds STAT4 through a membrane-distal C-terminal region. Post-translationally, on IL12 binding, phosphorylated on C-terminal tyrosine residues by JAK2. Phosphorylation on Tyr-800 is required for STAT4 binding and activation, and for SOCS3 binding. Isoform 2 is expressed at similar levels in both naive and activated T-cells.

It localises to the membrane. Its function is as follows. Receptor for interleukin-12. This subunit is the signaling component coupling to the JAK2/STAT4 pathway. Promotes the proliferation of T-cells as well as NK cells. Induces the promotion of T-cells towards the Th1 phenotype by strongly enhancing IFN-gamma production. In Homo sapiens (Human), this protein is Interleukin-12 receptor subunit beta-2 (IL12RB2).